The sequence spans 301 residues: N-acetylmuramic acid 6-phosphate etherase (301 aa).

The 164-residue stretch at 57 to 220 (VVERLRAGGR…STISMVRLGK (164 aa)) folds into the SIS domain. Glutamate 85 functions as the Proton donor in the catalytic mechanism. Glutamate 116 is an active-site residue.

Belongs to the GCKR-like family. MurNAc-6-P etherase subfamily. In terms of assembly, homodimer.

It carries out the reaction N-acetyl-D-muramate 6-phosphate + H2O = N-acetyl-D-glucosamine 6-phosphate + (R)-lactate. It participates in amino-sugar metabolism; N-acetylmuramate degradation. Its function is as follows. Specifically catalyzes the cleavage of the D-lactyl ether substituent of MurNAc 6-phosphate, producing GlcNAc 6-phosphate and D-lactate. This chain is N-acetylmuramic acid 6-phosphate etherase, found in Rubrobacter xylanophilus (strain DSM 9941 / JCM 11954 / NBRC 16129 / PRD-1).